Here is a 488-residue protein sequence, read N- to C-terminus: UDP-N-acetylmuramoyl-L-alanyl-D-glutamate--2,6-diaminopimelate ligase (488 aa).

UDP-N-acetyl-alpha-D-muramoyl-L-alanyl-D-glutamate contacts are provided by residues Leu24, Ser26, and 41–43; that span reads HQV. 113 to 119 serves as a coordination point for ATP; that stretch reads GTNGKTT. Residues Asn154, 155–156, Ser182, Gln188, and Arg190 contribute to the UDP-N-acetyl-alpha-D-muramoyl-L-alanyl-D-glutamate site; that span reads TT. Lys222 carries the N6-carboxylysine modification. Residues Arg386, 410 to 413, Gly461, and Glu465 contribute to the meso-2,6-diaminopimelate site; that span reads DNPR. Positions 410-413 match the Meso-diaminopimelate recognition motif motif; sequence DNPR.

It belongs to the MurCDEF family. MurE subfamily. It depends on Mg(2+) as a cofactor. Post-translationally, carboxylation is probably crucial for Mg(2+) binding and, consequently, for the gamma-phosphate positioning of ATP.

Its subcellular location is the cytoplasm. It catalyses the reaction UDP-N-acetyl-alpha-D-muramoyl-L-alanyl-D-glutamate + meso-2,6-diaminopimelate + ATP = UDP-N-acetyl-alpha-D-muramoyl-L-alanyl-gamma-D-glutamyl-meso-2,6-diaminopimelate + ADP + phosphate + H(+). Its pathway is cell wall biogenesis; peptidoglycan biosynthesis. In terms of biological role, catalyzes the addition of meso-diaminopimelic acid to the nucleotide precursor UDP-N-acetylmuramoyl-L-alanyl-D-glutamate (UMAG) in the biosynthesis of bacterial cell-wall peptidoglycan. The polypeptide is UDP-N-acetylmuramoyl-L-alanyl-D-glutamate--2,6-diaminopimelate ligase (Haemophilus influenzae (strain PittEE)).